The following is a 194-amino-acid chain: Peptidyl-tRNA hydrolase (194 aa).

The active-site Proton acceptor is the His-22. 3 residues coordinate tRNA: Tyr-67, Asn-69, and Asn-115.

Belongs to the PTH family. Monomer.

Its subcellular location is the cytoplasm. It carries out the reaction an N-acyl-L-alpha-aminoacyl-tRNA + H2O = an N-acyl-L-amino acid + a tRNA + H(+). Functionally, hydrolyzes ribosome-free peptidyl-tRNAs (with 1 or more amino acids incorporated), which drop off the ribosome during protein synthesis, or as a result of ribosome stalling. Its function is as follows. Catalyzes the release of premature peptidyl moieties from peptidyl-tRNA molecules trapped in stalled 50S ribosomal subunits, and thus maintains levels of free tRNAs and 50S ribosomes. This Granulibacter bethesdensis (strain ATCC BAA-1260 / CGDNIH1) protein is Peptidyl-tRNA hydrolase.